The sequence spans 238 residues: MRPSKRQFDEMRAISFERGVSKHAEGSCLVKFGDTHVLCTASLEEKVPGWMRNSGKGWVTAEYGMLPRSTGERMRREASAGKQGGRTLEIQRLIGRSLRAVVDLQALGEQQITVDCDVIQADGGTRTASITGGWVALYDCLRWMEARQMASVSKVLKDHVAAISCGIHDGQPVIDLDYLEDSAAGTDANFVMTGKGGIVEIQGTAEGEPFSEDQFAELMGLAKKGIQRLVSLQQMAVA.

Residues R86 and 124–126 contribute to the phosphate site; that span reads GTR.

The protein belongs to the RNase PH family. Homohexameric ring arranged as a trimer of dimers.

It catalyses the reaction tRNA(n+1) + phosphate = tRNA(n) + a ribonucleoside 5'-diphosphate. In terms of biological role, phosphorolytic 3'-5' exoribonuclease that plays an important role in tRNA 3'-end maturation. Removes nucleotide residues following the 3'-CCA terminus of tRNAs; can also add nucleotides to the ends of RNA molecules by using nucleoside diphosphates as substrates, but this may not be physiologically important. Probably plays a role in initiation of 16S rRNA degradation (leading to ribosome degradation) during starvation. In Mesorhizobium japonicum (strain LMG 29417 / CECT 9101 / MAFF 303099) (Mesorhizobium loti (strain MAFF 303099)), this protein is Ribonuclease PH.